A 388-amino-acid polypeptide reads, in one-letter code: Succinate--CoA ligase [ADP-forming] subunit beta (388 aa).

In terms of domain architecture, ATP-grasp spans lysine 9–histidine 244. Residues lysine 46, glycine 53–glycine 55, glutamate 99, threonine 102, and glutamate 107 contribute to the ATP site. The Mg(2+) site is built by asparagine 199 and aspartate 213. Substrate-binding positions include asparagine 264 and glycine 321–valine 323.

The protein belongs to the succinate/malate CoA ligase beta subunit family. In terms of assembly, heterotetramer of two alpha and two beta subunits. It depends on Mg(2+) as a cofactor.

It catalyses the reaction succinate + ATP + CoA = succinyl-CoA + ADP + phosphate. The catalysed reaction is GTP + succinate + CoA = succinyl-CoA + GDP + phosphate. Its pathway is carbohydrate metabolism; tricarboxylic acid cycle; succinate from succinyl-CoA (ligase route): step 1/1. Succinyl-CoA synthetase functions in the citric acid cycle (TCA), coupling the hydrolysis of succinyl-CoA to the synthesis of either ATP or GTP and thus represents the only step of substrate-level phosphorylation in the TCA. The beta subunit provides nucleotide specificity of the enzyme and binds the substrate succinate, while the binding sites for coenzyme A and phosphate are found in the alpha subunit. The sequence is that of Succinate--CoA ligase [ADP-forming] subunit beta from Pseudomonas syringae pv. tomato (strain ATCC BAA-871 / DC3000).